The sequence spans 547 residues: Chaperonin GroEL 1 (547 aa).

ATP-binding positions include 30–33 (TLGP), Lys-51, 87–91 (DGTTT), Gly-415, and Asp-496.

It belongs to the chaperonin (HSP60) family. Forms a cylinder of 14 subunits composed of two heptameric rings stacked back-to-back. Interacts with the co-chaperonin GroES.

It localises to the cytoplasm. The enzyme catalyses ATP + H2O + a folded polypeptide = ADP + phosphate + an unfolded polypeptide.. Functionally, together with its co-chaperonin GroES, plays an essential role in assisting protein folding. The GroEL-GroES system forms a nano-cage that allows encapsulation of the non-native substrate proteins and provides a physical environment optimized to promote and accelerate protein folding. This Bradyrhizobium sp. (strain BTAi1 / ATCC BAA-1182) protein is Chaperonin GroEL 1.